The following is a 226-amino-acid chain: ATP-dependent dethiobiotin synthetase BioD (226 aa).

Residue 13 to 18 coordinates ATP; that stretch reads DVGKTL. Threonine 17 lines the Mg(2+) pocket. Residue lysine 38 is part of the active site. ATP contacts are provided by residues aspartate 55, 117 to 120, 177 to 178, 206 to 208, and glutamate 213; these read EGAG, NR, and PFV. Residues aspartate 55 and glutamate 117 each contribute to the Mg(2+) site.

Belongs to the dethiobiotin synthetase family. In terms of assembly, homodimer. Mg(2+) is required as a cofactor.

It is found in the cytoplasm. The enzyme catalyses (7R,8S)-7,8-diammoniononanoate + CO2 + ATP = (4R,5S)-dethiobiotin + ADP + phosphate + 3 H(+). It functions in the pathway cofactor biosynthesis; biotin biosynthesis; biotin from 7,8-diaminononanoate: step 1/2. Functionally, catalyzes a mechanistically unusual reaction, the ATP-dependent insertion of CO2 between the N7 and N8 nitrogen atoms of 7,8-diaminopelargonic acid (DAPA, also called 7,8-diammoniononanoate) to form a ureido ring. This chain is ATP-dependent dethiobiotin synthetase BioD, found in Aeromonas salmonicida (strain A449).